The sequence spans 387 residues: Pepsin II-1 (387 aa).

Positions 1-15 (MKWLLLLGLLALSEC) are cleaved as a signal peptide. The propeptide at 16–59 (IVHKVPLVRKKSLRKNLIEKGLLQDYLKTHTPNLATKYFPKETF) is activation peptide. A Peptidase A1 domain is found at 75 to 384 (YFGTISIGTP…DRANNQVGLA (310 aa)). The active site involves D93. The cysteines at positions 106 and 111 are disulfide-linked. A Phosphoserine modification is found at S129. Cysteines 267 and 271 form a disulfide. The active site involves D276. A disulfide bridge connects residues C310 and C343.

The protein belongs to the peptidase A1 family.

The protein resides in the secreted. It carries out the reaction Preferential cleavage: hydrophobic, preferably aromatic, residues in P1 and P1' positions. Cleaves 1-Phe-|-Val-2, 4-Gln-|-His-5, 13-Glu-|-Ala-14, 14-Ala-|-Leu-15, 15-Leu-|-Tyr-16, 16-Tyr-|-Leu-17, 23-Gly-|-Phe-24, 24-Phe-|-Phe-25 and 25-Phe-|-Tyr-26 bonds in the B chain of insulin.. Functionally, shows particularly broad specificity; although bonds involving phenylalanine and leucine are preferred, many others are also cleaved to some extent. This Oryctolagus cuniculus (Rabbit) protein is Pepsin II-1.